Consider the following 185-residue polypeptide: Ribosome-recycling factor (185 aa).

It belongs to the RRF family.

Its subcellular location is the cytoplasm. In terms of biological role, responsible for the release of ribosomes from messenger RNA at the termination of protein biosynthesis. May increase the efficiency of translation by recycling ribosomes from one round of translation to another. The sequence is that of Ribosome-recycling factor from Corynebacterium kroppenstedtii (strain DSM 44385 / JCM 11950 / CIP 105744 / CCUG 35717).